We begin with the raw amino-acid sequence, 94 residues long: Co-chaperonin GroES (94 aa).

The protein belongs to the GroES chaperonin family. Heptamer of 7 subunits arranged in a ring. Interacts with the chaperonin GroEL.

Its subcellular location is the cytoplasm. Together with the chaperonin GroEL, plays an essential role in assisting protein folding. The GroEL-GroES system forms a nano-cage that allows encapsulation of the non-native substrate proteins and provides a physical environment optimized to promote and accelerate protein folding. GroES binds to the apical surface of the GroEL ring, thereby capping the opening of the GroEL channel. The protein is Co-chaperonin GroES of Staphylococcus carnosus (strain TM300).